Here is a 270-residue protein sequence, read N- to C-terminus: Inositol monophosphatase (270 aa).

The Mg(2+) site is built by E71, D91, L93, and D94. E71 contributes to the substrate binding site. Substrate contacts are provided by residues 93 to 96 (LDGT), 194 to 196 (GSC), E213, and D221. Mg(2+) is bound at residue D221.

Belongs to the inositol monophosphatase superfamily. It depends on Mg(2+) as a cofactor.

The catalysed reaction is a myo-inositol phosphate + H2O = myo-inositol + phosphate. The protein operates within polyol metabolism; myo-inositol biosynthesis; myo-inositol from D-glucose 6-phosphate: step 2/2. With respect to regulation, inhibited by Li(+). In terms of biological role, responsible for the provision of inositol required for synthesis of phosphatidylinositol and polyphosphoinositides. The chain is Inositol monophosphatase (IMP1) from Mesembryanthemum crystallinum (Common ice plant).